A 237-amino-acid chain; its full sequence is Uridylate kinase (237 aa).

Position 12–15 (12–15 (KISG)) interacts with ATP. Gly-54 is a binding site for UMP. 2 residues coordinate ATP: Gly-55 and Arg-59. UMP-binding positions include Asp-72 and 133 to 140 (TGNPFFST). ATP-binding residues include Tyr-166 and Asp-169.

This sequence belongs to the UMP kinase family. As to quaternary structure, homohexamer.

It localises to the cytoplasm. The catalysed reaction is UMP + ATP = UDP + ADP. It participates in pyrimidine metabolism; CTP biosynthesis via de novo pathway; UDP from UMP (UMPK route): step 1/1. Inhibited by UTP. Its function is as follows. Catalyzes the reversible phosphorylation of UMP to UDP. The chain is Uridylate kinase from Caldanaerobacter subterraneus subsp. tengcongensis (strain DSM 15242 / JCM 11007 / NBRC 100824 / MB4) (Thermoanaerobacter tengcongensis).